A 273-amino-acid polypeptide reads, in one-letter code: Large ribosomal subunit protein uL2cz/uL2cy (273 aa).

Disordered regions lie at residues 1-23 (MAIHLYKTSTSSTRNGAVDSQVK) and 224-273 (NPVD…RRRK). Residues 262-273 (KYSDRFILRRRK) show a composition bias toward basic and acidic residues.

The protein belongs to the universal ribosomal protein uL2 family. As to quaternary structure, part of the 50S ribosomal subunit.

The protein resides in the plastid. It localises to the chloroplast. The polypeptide is Large ribosomal subunit protein uL2cz/uL2cy (rpl2-A) (Acorus calamus var. americanus (American sweet flag)).